A 90-amino-acid polypeptide reads, in one-letter code: Large ribosomal subunit protein bL31 (90 aa).

Residues 71–90 (KVKKFPSNADNQKEPAEEQE) are disordered. Residues 81 to 90 (NQKEPAEEQE) are compositionally biased toward basic and acidic residues.

The protein belongs to the bacterial ribosomal protein bL31 family. Type A subfamily. Part of the 50S ribosomal subunit.

Binds the 23S rRNA. The sequence is that of Large ribosomal subunit protein bL31 (rpmE) from Aster yellows witches'-broom phytoplasma (strain AYWB).